Reading from the N-terminus, the 72-residue chain is MAKEDVIEMQGTVLDTLPNTMFRVELENGHVVTAHISGKMRKNYIRILTGDKVTVEMTPYDLSKGRIVFRAR.

Residues 1–72 (MAKEDVIEMQ…SKGRIVFRAR (72 aa)) enclose the S1-like domain.

It belongs to the IF-1 family. Component of the 30S ribosomal translation pre-initiation complex which assembles on the 30S ribosome in the order IF-2 and IF-3, IF-1 and N-formylmethionyl-tRNA(fMet); mRNA recruitment can occur at any time during PIC assembly.

The protein resides in the cytoplasm. Functionally, one of the essential components for the initiation of protein synthesis. Stabilizes the binding of IF-2 and IF-3 on the 30S subunit to which N-formylmethionyl-tRNA(fMet) subsequently binds. Helps modulate mRNA selection, yielding the 30S pre-initiation complex (PIC). Upon addition of the 50S ribosomal subunit IF-1, IF-2 and IF-3 are released leaving the mature 70S translation initiation complex. The sequence is that of Translation initiation factor IF-1 from Vibrio cholerae serotype O1 (strain ATCC 39541 / Classical Ogawa 395 / O395).